Reading from the N-terminus, the 241-residue chain is uncharacterized protein (241 aa).

The GGDEF domain occupies 84–216; the sequence is TVVSLVVCDL…APGPVVAGRD (133 aa). Residues 215–241 are disordered; it reads RDGEVVRLADSPPKSAHDRRRLRGNRP. The span at 231 to 241 shows a compositional bias: basic residues; that stretch reads HDRRRLRGNRP.

This is an uncharacterized protein from Streptomyces griseus.